Here is a 578-residue protein sequence, read N- to C-terminus: Oxygen sensor histidine kinase response regulator DevS/DosS (578 aa).

2 consecutive GAF domains span residues 63 to 200 (DLEA…GIAV) and 231 to 369 (EPAT…ALAW). His149 lines the heme pocket. One can recognise a Histidine kinase domain in the interval 383–578 (VLTDRDRIAR…VLRWSAPLSQ (196 aa)). Residue His395 is modified to Phosphohistidine; by autocatalysis.

It depends on Mg(2+) as a cofactor. Heme is required as a cofactor.

The protein localises to the cytoplasm. It catalyses the reaction ATP + protein L-histidine = ADP + protein N-phospho-L-histidine.. Its function is as follows. Member of the two-component regulatory system DevR/DevS (DosR/DosS) involved in onset of the dormancy response. Regulates an approximately 48-member regulon. Required for full induction of the DevR (DosR) regulon; acts later than DosT to positively regulate expression of the DevR regulon during adaptation to anaerobiosis. Characterized as an oxygen sensor; O(2) acts as a switch, with O(2)-bound Fe(2+) protein inactive in autophosphorylation. Has also been suggested to act as a redox sensor, or perhaps as a dual oxygen/redox sensor. Donates a phosphate group to transcriptional regulator DevR (DosR). This is Oxygen sensor histidine kinase response regulator DevS/DosS (devS) from Mycobacterium tuberculosis (strain CDC 1551 / Oshkosh).